We begin with the raw amino-acid sequence, 283 residues long: 4-diphosphocytidyl-2-C-methyl-D-erythritol kinase (283 aa).

The active site involves K10. 99–109 contacts ATP; that stretch reads PMGGGLGGGSS. D141 is a catalytic residue.

Belongs to the GHMP kinase family. IspE subfamily. As to quaternary structure, homodimer.

The enzyme catalyses 4-CDP-2-C-methyl-D-erythritol + ATP = 4-CDP-2-C-methyl-D-erythritol 2-phosphate + ADP + H(+). It participates in isoprenoid biosynthesis; isopentenyl diphosphate biosynthesis via DXP pathway; isopentenyl diphosphate from 1-deoxy-D-xylulose 5-phosphate: step 3/6. Functionally, catalyzes the phosphorylation of the position 2 hydroxy group of 4-diphosphocytidyl-2C-methyl-D-erythritol. The protein is 4-diphosphocytidyl-2-C-methyl-D-erythritol kinase of Escherichia coli O127:H6 (strain E2348/69 / EPEC).